The primary structure comprises 494 residues: AAA-ATPase At2g18190 (494 aa).

The chain crosses the membrane as a helical span at residues 13–29 (SSLFTAYASLTGFLMLF). 251-258 (GPPGTGKS) is a binding site for ATP. Residues 459–470 (TCRKLDGDDKHN) are compositionally biased toward basic and acidic residues. The segment at 459–494 (TCRKLDGDDKHNVSSTNDLKKTKKKKKGGKGKAKGN) is disordered. The span at 479–494 (KTKKKKKGGKGKAKGN) shows a compositional bias: basic residues.

Belongs to the AAA ATPase family. BCS1 subfamily. It depends on Mg(2+) as a cofactor.

The protein resides in the membrane. It carries out the reaction ATP + H2O = ADP + phosphate + H(+). This Arabidopsis thaliana (Mouse-ear cress) protein is AAA-ATPase At2g18190.